The following is a 215-amino-acid chain: Adenylate kinase (215 aa).

10–15 serves as a coordination point for ATP; the sequence is GSGKGT. Residues 30–59 are NMP; the sequence is STGDILREHVRNGTELGKEAKKYMDAGQLV. Residues T31, R36, 57–59, 85–88, and Q92 contribute to the AMP site; these read QLV and GYPR. An LID region spans residues 126-162; it reads GRRMCKCGRSYHIIFNPPKVPGKCDECGGELYHRDDD. Position 127 (R127) interacts with ATP. C130 and C132 together coordinate Zn(2+). Position 135-136 (135-136) interacts with ATP; that stretch reads SY. Zn(2+) contacts are provided by C149 and C152. AMP is bound by residues R159 and R170. Residue G198 participates in ATP binding.

This sequence belongs to the adenylate kinase family. In terms of assembly, monomer.

The protein resides in the cytoplasm. It catalyses the reaction AMP + ATP = 2 ADP. It participates in purine metabolism; AMP biosynthesis via salvage pathway; AMP from ADP: step 1/1. Functionally, catalyzes the reversible transfer of the terminal phosphate group between ATP and AMP. Plays an important role in cellular energy homeostasis and in adenine nucleotide metabolism. This chain is Adenylate kinase, found in Methanothrix thermoacetophila (strain DSM 6194 / JCM 14653 / NBRC 101360 / PT) (Methanosaeta thermophila).